The following is a 179-amino-acid chain: MPSSSALLCCLVFLAGVAASRDASAPSDSSCTHFSNSLPLMLRELRTAFSRVKNFFQMKDQLDSMLLTQSLLDDFKGYLGCQALSEMIQFYLEEVMPQAENHGPEIKEHVNSLGEKLKTLRLRLRRCHRFLPCENKSKAVEQVKSVFSKLQERGVYKAMSEFDIFINYIETYTTMKMKN.

The N-terminal stretch at 1-19 is a signal peptide; the sequence is MPSSSALLCCLVFLAGVAA. Disulfide bonds link cysteine 31/cysteine 127 and cysteine 81/cysteine 133. Residue asparagine 135 is glycosylated (N-linked (GlcNAc...) asparagine).

The protein belongs to the IL-10 family. In terms of assembly, homodimer. Interacts with IL10RA and IL10RB.

The protein localises to the secreted. Major immune regulatory cytokine that acts on many cells of the immune system where it has profound anti-inflammatory functions, limiting excessive tissue disruption caused by inflammation. Mechanistically, IL10 binds to its heterotetrameric receptor comprising IL10RA and IL10RB leading to JAK1 and STAT2-mediated phosphorylation of STAT3. In turn, STAT3 translocates to the nucleus where it drives expression of anti-inflammatory mediators. Targets antigen-presenting cells (APCs) such as macrophages and monocytes and inhibits their release of pro-inflammatory cytokines including granulocyte-macrophage colony-stimulating factor /GM-CSF, granulocyte colony-stimulating factor/G-CSF, IL-1 alpha, IL-1 beta, IL-6, IL-8 and TNF-alpha. Also interferes with antigen presentation by reducing the expression of MHC-class II and co-stimulatory molecules, thereby inhibiting their ability to induce T cell activation. In addition, controls the inflammatory response of macrophages by reprogramming essential metabolic pathways including mTOR signaling. The protein is Interleukin-10 (IL10) of Cervus elaphus (Red deer).